The primary structure comprises 600 residues: Protein GPR107 (600 aa).

The first 39 residues, 1–39 (MAALAPVGSPASRGPRLAAGLRLLPMLGLLQLLAEPGLG), serve as a signal peptide directing secretion. The Extracellular portion of the chain corresponds to 40–263 (RVHHLALKDD…YLSAGEIPLP (224 aa)). N-linked (GlcNAc...) asparagine glycosylation is found at N70 and N169. C109 and C228 are oxidised to a cystine. Polar residues predominate over residues 157 to 175 (SQEPNVNPASAGNQTQKTQ). The segment at 157–185 (SQEPNVNPASAGNQTQKTQDGGKSKRSTV) is disordered. Positions 176 to 185 (DGGKSKRSTV) are enriched in basic and acidic residues. N-linked (GlcNAc...) asparagine glycosylation occurs at N211. The chain crosses the membrane as a helical span at residues 264 to 284 (KLYISMAFFFFLSGTIWIHIL). The Cytoplasmic portion of the chain corresponds to 285-293 (RKRRNDVFK). The chain crosses the membrane as a helical span at residues 294-314 (IHWLMAALPFTKSLSLVFHAI). The Extracellular segment spans residues 315–337 (DYHYISSQGFPIEGWAVVYYITH). The chain crosses the membrane as a helical span at residues 338–358 (LLKGALLFITIALIGTGWAFI). The Cytoplasmic segment spans residues 359-368 (KHILSDKDKK). The helical transmembrane segment at 369-389 (IFMIVIPLQVLANVAYIIIES) threads the bilayer. Residues 390 to 402 (TEEGTTEYGLWKD) lie on the Extracellular side of the membrane. A helical membrane pass occupies residues 403-423 (SLFLVDLLCCGAILFPVVWSI). Topologically, residues 424-498 (RHLQEASATD…AKLKLFRHYY (75 aa)) are cytoplasmic. A helical transmembrane segment spans residues 499 to 519 (VLIVCYIYFTRIIAFLLKLAV). The Extracellular segment spans residues 520-524 (PFQWK). The helical transmembrane segment at 525 to 544 (WLYQLLDETATLVFFVLTGY) threads the bilayer. Residues 545-600 (KFRPASDNPYLQLSQEEEDLEMESVVTTSGVMESMKKVKKVTNGSVEPQGEWEGAV) lie on the Cytoplasmic side of the membrane.

This sequence belongs to the LU7TM family. Cleaved by FURIN to yield two fragments of 17 and 35 kDa that remain associated via a disulfide bond.

The protein resides in the cell membrane. It localises to the golgi apparatus. It is found in the trans-Golgi network membrane. Functionally, has been proposed to act as a receptor for neuronostatin, a peptide derived from the somatostatin/SST precursor. Involved in blood sugar regulation through the induction of glucagon in response to low glucose. In terms of biological role, (Microbial infection) Required for intoxication by Pseudomonas aeruginosa exotoxin A and Campylobacter jejuni CDT. May contribute to the retrograde transport of bacterial toxins, including cholera toxin, from the trans-Golgi network to the endoplasmic reticulum. This chain is Protein GPR107 (GPR107), found in Homo sapiens (Human).